The sequence spans 416 residues: Serine hydroxymethyltransferase (416 aa).

(6S)-5,6,7,8-tetrahydrofolate is bound by residues Leu-118 and 122 to 124 (GHL). Position 226 is an N6-(pyridoxal phosphate)lysine (Lys-226). (6S)-5,6,7,8-tetrahydrofolate is bound at residue Glu-242.

It belongs to the SHMT family. In terms of assembly, homodimer. Pyridoxal 5'-phosphate serves as cofactor.

It is found in the cytoplasm. It catalyses the reaction (6R)-5,10-methylene-5,6,7,8-tetrahydrofolate + glycine + H2O = (6S)-5,6,7,8-tetrahydrofolate + L-serine. It participates in one-carbon metabolism; tetrahydrofolate interconversion. It functions in the pathway amino-acid biosynthesis; glycine biosynthesis; glycine from L-serine: step 1/1. In terms of biological role, catalyzes the reversible interconversion of serine and glycine with tetrahydrofolate (THF) serving as the one-carbon carrier. This reaction serves as the major source of one-carbon groups required for the biosynthesis of purines, thymidylate, methionine, and other important biomolecules. Also exhibits THF-independent aldolase activity toward beta-hydroxyamino acids, producing glycine and aldehydes, via a retro-aldol mechanism. The sequence is that of Serine hydroxymethyltransferase from Helicobacter pylori (strain J99 / ATCC 700824) (Campylobacter pylori J99).